The primary structure comprises 461 residues: tRNA modification GTPase MnmE (461 aa).

The (6S)-5-formyl-5,6,7,8-tetrahydrofolate site is built by Arg-27, Glu-89, and Arg-128. Residues Gly-224–Phe-382 form the TrmE-type G domain. Asn-234 lines the K(+) pocket. GTP-binding positions include Asn-234–Ser-239, Thr-253–Thr-259, and Asp-278–Gly-281. Residue Ser-238 participates in Mg(2+) binding. K(+) contacts are provided by Thr-253, Val-255, and Thr-258. Thr-259 is a Mg(2+) binding site. Lys-461 provides a ligand contact to (6S)-5-formyl-5,6,7,8-tetrahydrofolate.

Belongs to the TRAFAC class TrmE-Era-EngA-EngB-Septin-like GTPase superfamily. TrmE GTPase family. Homodimer. Heterotetramer of two MnmE and two MnmG subunits. It depends on K(+) as a cofactor.

It is found in the cytoplasm. In terms of biological role, exhibits a very high intrinsic GTPase hydrolysis rate. Involved in the addition of a carboxymethylaminomethyl (cmnm) group at the wobble position (U34) of certain tRNAs, forming tRNA-cmnm(5)s(2)U34. This chain is tRNA modification GTPase MnmE, found in Lactobacillus acidophilus (strain ATCC 700396 / NCK56 / N2 / NCFM).